The following is a 181-amino-acid chain: Dual-action ribosomal maturation protein DarP (181 aa).

Residues M1–K24 form a disordered region.

Belongs to the DarP family.

Its subcellular location is the cytoplasm. In terms of biological role, member of a network of 50S ribosomal subunit biogenesis factors which assembles along the 30S-50S interface, preventing incorrect 23S rRNA structures from forming. Promotes peptidyl transferase center (PTC) maturation. This chain is Dual-action ribosomal maturation protein DarP, found in Aeromonas hydrophila subsp. hydrophila (strain ATCC 7966 / DSM 30187 / BCRC 13018 / CCUG 14551 / JCM 1027 / KCTC 2358 / NCIMB 9240 / NCTC 8049).